The sequence spans 426 residues: Dihydroorotase (426 aa).

The Zn(2+) site is built by His58 and His60. Substrate-binding positions include 60-62 and Asn92; that span reads HLR. Zn(2+) contacts are provided by Asp150, His177, and His230. A substrate-binding site is contributed by Asn276. Asp303 lines the Zn(2+) pocket. Residue Asp303 is part of the active site. Substrate-binding positions include His307 and 321–322; that span reads FG.

This sequence belongs to the metallo-dependent hydrolases superfamily. DHOase family. Class I DHOase subfamily. It depends on Zn(2+) as a cofactor.

The enzyme catalyses (S)-dihydroorotate + H2O = N-carbamoyl-L-aspartate + H(+). The protein operates within pyrimidine metabolism; UMP biosynthesis via de novo pathway; (S)-dihydroorotate from bicarbonate: step 3/3. Its function is as follows. Catalyzes the reversible cyclization of carbamoyl aspartate to dihydroorotate. The sequence is that of Dihydroorotase from Listeria welshimeri serovar 6b (strain ATCC 35897 / DSM 20650 / CCUG 15529 / CIP 8149 / NCTC 11857 / SLCC 5334 / V8).